The following is a 355-amino-acid chain: Probable poly-beta-1,6-N-acetyl-D-glucosamine export protein (355 aa).

A run of 10 helical transmembrane segments spans residues 13–30 (AFIC…QITL), 45–67 (YIRN…LTTL), 74–96 (INYL…LFYS), 116–138 (VLGQ…SYII), 145–167 (LFNS…HYFL), 187–204 (MILG…IGYN), 211–233 (FLEK…FIAV), 243–262 (SFTY…LLGV), 269–291 (MLLN…HPII), and 306–328 (TIVF…GMML).

This sequence belongs to the acyltransferase 3 family.

The protein localises to the cell membrane. Its function is as follows. Presumably involved in the export of the biofilm adhesin polysaccharide poly-beta-1,6-N-acetyl-D-glucosamine (PNAG, also referred to as PIA) across the cell membrane. This is Probable poly-beta-1,6-N-acetyl-D-glucosamine export protein (icaC) from Staphylococcus epidermidis.